The following is a 327-amino-acid chain: Lipid phosphate phosphatase 1 (327 aa).

The next 6 membrane-spanning stretches (helical) occupy residues 51–71, 93–113, 118–138, 187–207, 217–237, and 244–264; these read WIIL…SPFY, IWSV…CFYL, VYDL…TGVI, FPSG…LYLS, GHVA…LVGI, and WHHW…AAFC.

Belongs to the PA-phosphatase related phosphoesterase family. In terms of tissue distribution, strongly expressed in leaves, moderately in roots, weakly in floral hamps and flower buds, and not detected in adult flowers and seedpods.

It is found in the membrane. With respect to regulation, PA phosphatase activity inhibited by N-ethylmaleimide with an IC(50) value of 10 mM. Its function is as follows. Plays a general role in cellular responses to stress, may be by attenuating the signal produced by phospholipases. Exhibits both diacylglycerol pyrophosphate (DGPP) phosphatase and phosphatidate (PA) phosphatase activities. Substrate preference is diacylglycerol pyrophosphate &gt; phosphatidate. This chain is Lipid phosphate phosphatase 1 (LPP1), found in Arabidopsis thaliana (Mouse-ear cress).